The chain runs to 409 residues: Arginine deiminase (409 aa).

The active-site Amidino-cysteine intermediate is the Cys-399.

The protein belongs to the arginine deiminase family.

The protein resides in the cytoplasm. The catalysed reaction is L-arginine + H2O = L-citrulline + NH4(+). The protein operates within amino-acid degradation; L-arginine degradation via ADI pathway; carbamoyl phosphate from L-arginine: step 1/2. The protein is Arginine deiminase of Streptococcus pneumoniae (strain JJA).